The sequence spans 582 residues: SHC-transforming protein 2 (582 aa).

Disordered stretches follow at residues 1–24 (MTQGPGGRAPPAPPAPPEPEAPTT) and 47–70 (GPAAARAAGASGGADPQPEPAGPG). Over residues 8 to 20 (RAPPAPPAPPEPE) the composition is skewed to pro residues. The region spanning 147-329 (LGPGVSYVVR…AGPEESAWGD (183 aa)) is the PID domain. The interval 330-486 (EEDSLEHNYY…PTEEQLRQEP (157 aa)) is CH1. A phosphotyrosine mark is found at Y338, Y339, and Y414. The disordered stretch occupies residues 460 to 481 (PLEDQWPSPPTRRAPVAPTEEQ). Residues 487–578 (WYHGRMSRRA…ESELHLRGVV (92 aa)) enclose the SH2 domain.

In terms of assembly, interacts with the Trk receptors in a phosphotyrosine-dependent manner and MEGF12. Once activated, binds to GRB2. Post-translationally, phosphorylated on tyrosines by the Trk receptors. In terms of tissue distribution, expressed in brain. Expressed at high level in the hypothalamus and at low level in the caudate nucleus.

Its function is as follows. Signaling adapter that couples activated growth factor receptors to signaling pathway in neurons. Involved in the signal transduction pathways of neurotrophin-activated Trk receptors in cortical neurons. The polypeptide is SHC-transforming protein 2 (SHC2) (Homo sapiens (Human)).